The sequence spans 540 residues: Glucose-6-phosphate isomerase (540 aa).

Glu346 serves as the catalytic Proton donor. Residues His377 and Lys505 contribute to the active site.

Belongs to the GPI family.

The protein resides in the cytoplasm. It catalyses the reaction alpha-D-glucose 6-phosphate = beta-D-fructose 6-phosphate. The protein operates within carbohydrate biosynthesis; gluconeogenesis. Its pathway is carbohydrate degradation; glycolysis; D-glyceraldehyde 3-phosphate and glycerone phosphate from D-glucose: step 2/4. Its function is as follows. Catalyzes the reversible isomerization of glucose-6-phosphate to fructose-6-phosphate. This Francisella philomiragia subsp. philomiragia (strain ATCC 25017 / CCUG 19701 / FSC 153 / O#319-036) protein is Glucose-6-phosphate isomerase.